A 1036-amino-acid polypeptide reads, in one-letter code: Serine/threonine-protein kinase ULK2 (1036 aa).

Residues tyrosine 9–leucine 271 form the Protein kinase domain. Residues valine 15–valine 23 and lysine 39 contribute to the ATP site. Residue aspartate 131 is the Proton acceptor of the active site. 5 disordered regions span residues glutamate 319–cysteine 348, threonine 418–alanine 460, cysteine 491–serine 522, glutamine 540–tryptophan 588, and alanine 656–glutamate 695. Residues serine 335–cysteine 348 are compositionally biased toward low complexity. Positions threonine 418–histidine 428 are enriched in polar residues. Serine 430 carries the post-translational modification Phosphoserine. The span at arginine 504–leucine 521 shows a compositional bias: polar residues. Residues glutamine 659–lysine 679 are compositionally biased toward polar residues. Phosphoserine is present on residues serine 771 and serine 780. Residues glutamate 812 to valine 1036 form a CTD-like region region.

It belongs to the protein kinase superfamily. Ser/Thr protein kinase family. APG1/unc-51/ULK1 subfamily. Interacts with SYNGAP1. Component of a complex consisting of ATG13/KIAA0652, ULK1 and RB1CC1/FIP200. Interacts (via C-terminus) with ATG13/KIAA0652. Associates with the mammalian target of rapamycin complex 1 (mTORC1) through an interaction with RPTOR. In terms of processing, autophosphorylated. In response to nutrient limitation, probably phosphorylated and activated by AMPK, leading to activate autophagy.

The protein resides in the cytoplasmic vesicle membrane. It catalyses the reaction L-seryl-[protein] + ATP = O-phospho-L-seryl-[protein] + ADP + H(+). It carries out the reaction L-threonyl-[protein] + ATP = O-phospho-L-threonyl-[protein] + ADP + H(+). Serine/threonine-protein kinase involved in autophagy in response to starvation. Acts upstream of phosphatidylinositol 3-kinase PIK3C3 to regulate the formation of autophagophores, the precursors of autophagosomes. Part of regulatory feedback loops in autophagy: acts both as a downstream effector and a negative regulator of mammalian target of rapamycin complex 1 (mTORC1) via interaction with RPTOR. Activated via phosphorylation by AMPK, also acts as a negative regulator of AMPK through phosphorylation of the AMPK subunits PRKAA1, PRKAB2 and PRKAG1. May phosphorylate ATG13/KIAA0652, FRS2, FRS3 and RPTOR; however such data need additional evidences. Not involved in ammonia-induced autophagy or in autophagic response of cerebellar granule neurons (CGN) to low potassium concentration. Plays a role early in neuronal differentiation and is required for granule cell axon formation: may govern axon formation via Ras-like GTPase signaling and through regulation of the Rab5-mediated endocytic pathways within developing axons. In Homo sapiens (Human), this protein is Serine/threonine-protein kinase ULK2 (ULK2).